A 491-amino-acid polypeptide reads, in one-letter code: Cysteine--tRNA ligase (491 aa).

Cys-31 is a Zn(2+) binding site. The 'HIGH' region signature appears at Pro-33 to His-43. Cys-226, His-251, and Glu-255 together coordinate Zn(2+). Positions Lys-283 to Ser-287 match the 'KMSKS' region motif. Lys-286 is an ATP binding site.

The protein belongs to the class-I aminoacyl-tRNA synthetase family. In terms of assembly, monomer. Requires Zn(2+) as cofactor.

The protein localises to the cytoplasm. It catalyses the reaction tRNA(Cys) + L-cysteine + ATP = L-cysteinyl-tRNA(Cys) + AMP + diphosphate. The protein is Cysteine--tRNA ligase of Parabacteroides distasonis (strain ATCC 8503 / DSM 20701 / CIP 104284 / JCM 5825 / NCTC 11152).